The following is a 183-amino-acid chain: Adenine phosphoribosyltransferase (183 aa).

The protein belongs to the purine/pyrimidine phosphoribosyltransferase family. Homodimer.

The protein resides in the cytoplasm. The enzyme catalyses AMP + diphosphate = 5-phospho-alpha-D-ribose 1-diphosphate + adenine. It functions in the pathway purine metabolism; AMP biosynthesis via salvage pathway; AMP from adenine: step 1/1. In terms of biological role, catalyzes a salvage reaction resulting in the formation of AMP, that is energically less costly than de novo synthesis. The protein is Adenine phosphoribosyltransferase of Shewanella sp. (strain ANA-3).